The sequence spans 491 residues: Malonate-semialdehyde dehydrogenase 1 (491 aa).

A154, F156, K180, E183, R184, S233, and T255 together coordinate NAD(+). The active-site Nucleophile is C288. NAD(+) is bound at residue E386.

It belongs to the aldehyde dehydrogenase family. IolA subfamily. In terms of assembly, homotetramer.

It carries out the reaction 3-oxopropanoate + NAD(+) + CoA + H2O = hydrogencarbonate + acetyl-CoA + NADH + H(+). The enzyme catalyses 2-methyl-3-oxopropanoate + NAD(+) + CoA + H2O = propanoyl-CoA + hydrogencarbonate + NADH + H(+). It participates in polyol metabolism; myo-inositol degradation into acetyl-CoA; acetyl-CoA from myo-inositol: step 7/7. Functionally, catalyzes the oxidation of malonate semialdehyde (MSA) and methylmalonate semialdehyde (MMSA) into acetyl-CoA and propanoyl-CoA, respectively. Is involved in a myo-inositol catabolic pathway. Bicarbonate, and not CO2, is the end-product of the enzymatic reaction. This chain is Malonate-semialdehyde dehydrogenase 1, found in Shouchella clausii (strain KSM-K16) (Alkalihalobacillus clausii).